Here is a 430-residue protein sequence, read N- to C-terminus: Histidinol dehydrogenase (430 aa).

Residues serine 237, glutamine 259, and histidine 262 each coordinate substrate. Residues glutamine 259 and histidine 262 each contribute to the Zn(2+) site. Catalysis depends on proton acceptor residues glutamate 327 and histidine 328. Substrate is bound by residues histidine 328, aspartate 361, glutamate 415, and histidine 420. Aspartate 361 contacts Zn(2+). Histidine 420 is a Zn(2+) binding site.

Belongs to the histidinol dehydrogenase family. Zn(2+) serves as cofactor.

The catalysed reaction is L-histidinol + 2 NAD(+) + H2O = L-histidine + 2 NADH + 3 H(+). It functions in the pathway amino-acid biosynthesis; L-histidine biosynthesis; L-histidine from 5-phospho-alpha-D-ribose 1-diphosphate: step 9/9. Catalyzes the sequential NAD-dependent oxidations of L-histidinol to L-histidinaldehyde and then to L-histidine. The sequence is that of Histidinol dehydrogenase from Sulfurimonas denitrificans (strain ATCC 33889 / DSM 1251) (Thiomicrospira denitrificans (strain ATCC 33889 / DSM 1251)).